The chain runs to 1041 residues: FHIP family protein CG3558 (1041 aa).

Ser-490 is subject to Phosphoserine. Disordered regions lie at residues 619–648 (RPAD…SSSL), 792–818 (KGNE…QGQL), 858–879 (SMFS…SASS), 903–947 (DGRG…SNSS), and 959–986 (SNTT…SEPA). Residues 628–637 (TDTTVATTAS) are compositionally biased toward polar residues. Ser-797 is modified (phosphoserine). The span at 800–818 (HHSQQQQMVTNSGQQQGQL) shows a compositional bias: polar residues. Polar residues predominate over residues 903 to 925 (DGRGISQAQTSAGTCETSLSTQP). Residues 927-947 (AGASRTGANATSTAASGSNSS) show a composition bias toward low complexity. Residues 959-968 (SNTTTHSAST) show a composition bias toward polar residues.

Belongs to the FHIP family.

This chain is FHIP family protein CG3558, found in Drosophila melanogaster (Fruit fly).